The chain runs to 391 residues: Thioredoxin-interacting protein (391 aa).

Residue K212 forms a Glycyl lysine isopeptide (Lys-Gly) (interchain with G-Cter in ubiquitin) linkage. A Phosphoserine modification is found at S361.

This sequence belongs to the arrestin family. As to quaternary structure, homodimer; disulfide-linked. Interacts with TXN/thioredoxin through its redox-active site. Interacts with transcriptional repressors ZBTB16, ZBTB32 and HDAC1. Interacts with DDIT4. In terms of processing, ubiquitinated; undergoes heterotypic 'Lys-48'-/'Lys-63'-branched polyubiquitination catalyzed by ITCH and UBR5 resulting in proteasomal degradation. Deubiquitinated by USP5, leading to TXNIP stabilization.

It localises to the cytoplasm. May act as an oxidative stress mediator by inhibiting thioredoxin activity or by limiting its bioavailability. Interacts with COPS5 and restores COPS5-induced suppression of CDKN1B stability, blocking the COPS5-mediated translocation of CDKN1B from the nucleus to the cytoplasm. Functions as a transcriptional repressor, possibly by acting as a bridge molecule between transcription factors and corepressor complexes, and over-expression will induce G0/G1 cell cycle arrest. Required for the maturation of natural killer cells. Acts as a suppressor of tumor cell growth. Inhibits the proteasomal degradation of DDIT4, and thereby contributes to the inhibition of the mammalian target of rapamycin complex 1 (mTORC1). This chain is Thioredoxin-interacting protein (TXNIP), found in Sus scrofa (Pig).